The chain runs to 449 residues: Probable glycine dehydrogenase (decarboxylating) subunit 1 (449 aa).

Belongs to the GcvP family. N-terminal subunit subfamily. As to quaternary structure, the glycine cleavage system is composed of four proteins: P, T, L and H. In this organism, the P 'protein' is a heterodimer of two subunits.

The catalysed reaction is N(6)-[(R)-lipoyl]-L-lysyl-[glycine-cleavage complex H protein] + glycine + H(+) = N(6)-[(R)-S(8)-aminomethyldihydrolipoyl]-L-lysyl-[glycine-cleavage complex H protein] + CO2. Functionally, the glycine cleavage system catalyzes the degradation of glycine. The P protein binds the alpha-amino group of glycine through its pyridoxal phosphate cofactor; CO(2) is released and the remaining methylamine moiety is then transferred to the lipoamide cofactor of the H protein. The protein is Probable glycine dehydrogenase (decarboxylating) subunit 1 of Rhodospirillum centenum (strain ATCC 51521 / SW).